We begin with the raw amino-acid sequence, 212 residues long: Ribonuclease HII (212 aa).

The RNase H type-2 domain maps to 7–212 (SQILGIDEAG…TIENITKSTE (206 aa)). Aspartate 13, glutamate 14, and aspartate 111 together coordinate a divalent metal cation.

It belongs to the RNase HII family. The cofactor is Mn(2+). Mg(2+) serves as cofactor.

Its subcellular location is the cytoplasm. It carries out the reaction Endonucleolytic cleavage to 5'-phosphomonoester.. Its function is as follows. Endonuclease that specifically degrades the RNA of RNA-DNA hybrids. In Methanosphaera stadtmanae (strain ATCC 43021 / DSM 3091 / JCM 11832 / MCB-3), this protein is Ribonuclease HII.